The sequence spans 274 residues: RsbT co-antagonist protein RsbRA (274 aa).

Positions 150 to 265 constitute an STAS domain; it reads SAPLIPVFEN…KGIQTALEMT (116 aa). 2 positions are modified to phosphothreonine: T171 and T205.

In terms of assembly, interacts with RsbRB and RsbS in the stressosome. The stressosome probably also contains RsbRC and RsbRD. In terms of processing, phosphorylated by RsbT. This threonine phosphorylation abrogates the ability of RsbRA to stimulate RsbT in vitro.

In terms of biological role, acts as a positive regulator of sigma-B activity in response to salt and heat stress by stimulating the activity of the RsbT kinase toward RsbS in vitro. Functionally, one of 4 functionally non-identical RsbR paralogs, it functions in the environmental signaling branch of the general stress response. Its function is as follows. Negative regulator of sigma-B activity. Non-phosphorylated RsbS binds to RsbT, preventing its association with RsbU. Requires any one of RsbRA, RsbRB, RsbRC or RsbRD to sequester RsbT. When RsbS and the RsbR paralog(s) are phosphorylated, they release RsbT, which can then bind and activate RsbU. This chain is RsbT co-antagonist protein RsbRA (rsbRA), found in Bacillus subtilis (strain 168).